A 348-amino-acid chain; its full sequence is Probable dual-specificity RNA methyltransferase RlmN (348 aa).

Glu-93 (proton acceptor) is an active-site residue. The 235-residue stretch at 99–333 (TEKRLTACLS…VSLRKSRGLD (235 aa)) folds into the Radical SAM core domain. Residues Cys-106 and Cys-338 are joined by a disulfide bond. [4Fe-4S] cluster-binding residues include Cys-113, Cys-117, and Cys-120. S-adenosyl-L-methionine is bound by residues 160–161 (GE), Ser-190, 219–221 (SLH), and Asn-295. Residue Cys-338 is the S-methylcysteine intermediate of the active site.

The protein belongs to the radical SAM superfamily. RlmN family. The cofactor is [4Fe-4S] cluster.

It localises to the cytoplasm. It catalyses the reaction adenosine(2503) in 23S rRNA + 2 reduced [2Fe-2S]-[ferredoxin] + 2 S-adenosyl-L-methionine = 2-methyladenosine(2503) in 23S rRNA + 5'-deoxyadenosine + L-methionine + 2 oxidized [2Fe-2S]-[ferredoxin] + S-adenosyl-L-homocysteine. It carries out the reaction adenosine(37) in tRNA + 2 reduced [2Fe-2S]-[ferredoxin] + 2 S-adenosyl-L-methionine = 2-methyladenosine(37) in tRNA + 5'-deoxyadenosine + L-methionine + 2 oxidized [2Fe-2S]-[ferredoxin] + S-adenosyl-L-homocysteine. In terms of biological role, specifically methylates position 2 of adenine 2503 in 23S rRNA and position 2 of adenine 37 in tRNAs. The protein is Probable dual-specificity RNA methyltransferase RlmN of Prochlorococcus marinus (strain MIT 9215).